The sequence spans 79 residues: uncharacterized protein (79 aa).

The disordered stretch occupies residues 1 to 37 (MQLDVFSRMMFGDAAKPTEEKEEEQQEEVSQVSQTND).

This is an uncharacterized protein from Bacillus subtilis (strain 168).